The primary structure comprises 145 residues: UPF0201 protein SSO1042 (145 aa).

This sequence belongs to the UPF0201 family.

In Saccharolobus solfataricus (strain ATCC 35092 / DSM 1617 / JCM 11322 / P2) (Sulfolobus solfataricus), this protein is UPF0201 protein SSO1042.